We begin with the raw amino-acid sequence, 441 residues long: Serine/threonine-protein phosphatase 4 regulatory subunit 2 (441 aa).

Over residues 201–213 (DEEEGFFDGDEDR) the composition is skewed to acidic residues. Disordered regions lie at residues 201–220 (DEEEGFFDGDEDREMGNKSK), 242–348 (INDD…LTTP), and 364–418 (SPSS…SQED). Residues 249–261 (NKGQNCQSDVTKN) show a composition bias toward polar residues. Acidic residues predominate over residues 264 to 302 (DDEDDDDNDDDYREDGADEDDEDDDHMGSTDDDEDDDED). The residue at position 347 (Thr-347) is a Phosphothreonine. The segment covering 388–398 (EDAHENHEGRS) has biased composition (basic and acidic residues).

It belongs to the PPP4R2 family. As to quaternary structure, regulatory subunit (R2) of the histone H2A phosphatase complex (HTP-C) consisting of PPH3, PSY2 and PSY4. Interacts with SPT4 and SPT5.

The protein localises to the nucleus. Its function is as follows. Regulatory subunit of the histone H2A phosphatase complex, which dephosphorylates H2AS128ph (gamma-H2A) that has been displaced from sites of DNA lesions in the double-stranded DNA break repair process. Dephosphorylation is necessary for efficient recovery from the DNA damage checkpoint. In Saccharomyces cerevisiae (strain ATCC 204508 / S288c) (Baker's yeast), this protein is Serine/threonine-protein phosphatase 4 regulatory subunit 2 (PSY4).